Reading from the N-terminus, the 523-residue chain is MSDRVIIFDTTLRDGEQALAASLTVKEKLQIALALERLGVDVMEVGFPVSSPGDFESVQTIARTVKNSRVCALSRALEKDIDAAAQALSVADQFRIHTFISTSTIHVESKLKRSFDQVLEMAVGAVKYARRFTDDVEFSCEDAGRTPIDNLCRMVEEAIKAGARTINIPDTVGYTVPSEFGGIIQTLFNRVPNIDQAVISVHCHDDLGLSVANSITAVQHGARQIECTVNGIGERAGNCSLEEIAMILSTRKGELGLETGINAKEIHRTSSLVSQLCNMPVQANKAIVGANAFTHSSGIHQDGMLKAQNTYEIMTPESIGLNRNNLNMTSRSGRHVIKHRMSELGYGDQDYDMDVLYEDFLVLADKKGQVFDYDLEALAFMEAQAEDDDHFKLQQLVVHSDSTEGSATATVKVEVNGETVTEAAIGNGPVDAAYKAVARASGCEIDITSYQLGAKGEGQNALGQVDITASYRNQNFHGVGLATDVVEASVKALVHVMNLTWRADKVADCKQKIQQEKQVLGGV.

The 263-residue stretch at 5-267 folds into the Pyruvate carboxyltransferase domain; that stretch reads VIIFDTTLRD…ETGINAKEIH (263 aa). Mn(2+) contacts are provided by D14, H202, H204, and N238. The interval 392-523 is regulatory domain; sequence KLQQLVVHSD…QQEKQVLGGV (132 aa).

This sequence belongs to the alpha-IPM synthase/homocitrate synthase family. LeuA type 1 subfamily. Homodimer. Requires Mn(2+) as cofactor.

It is found in the cytoplasm. It catalyses the reaction 3-methyl-2-oxobutanoate + acetyl-CoA + H2O = (2S)-2-isopropylmalate + CoA + H(+). It functions in the pathway amino-acid biosynthesis; L-leucine biosynthesis; L-leucine from 3-methyl-2-oxobutanoate: step 1/4. In terms of biological role, catalyzes the condensation of the acetyl group of acetyl-CoA with 3-methyl-2-oxobutanoate (2-ketoisovalerate) to form 3-carboxy-3-hydroxy-4-methylpentanoate (2-isopropylmalate). This chain is 2-isopropylmalate synthase, found in Shewanella piezotolerans (strain WP3 / JCM 13877).